Consider the following 647-residue polypeptide: Type II methyltransferase M.FokI (647 aa).

2 consecutive short sequence motifs (adenine-specific methylase) follow at residues D218–Y221 and D548–Y551.

The protein belongs to the N(4)/N(6)-methyltransferase family. As to quaternary structure, monomer.

It carries out the reaction a 2'-deoxyadenosine in DNA + S-adenosyl-L-methionine = an N(6)-methyl-2'-deoxyadenosine in DNA + S-adenosyl-L-homocysteine + H(+). Its function is as follows. An alpha subtype methylase that recognizes the asymmetric double-stranded sequence 5'-GGATG-3', methylates A-3 of both strands, and protects the DNA from cleavage by the FokI endonuclease. In Planomicrobium okeanokoites (Planococcus okeanokoites), this protein is Type II methyltransferase M.FokI.